A 211-amino-acid chain; its full sequence is MTSLAVLLTLADSRLPTGAHVHSGGIEEAIAAGLVTGLATLEAFLKRRVRTHGLLTASIAAAVHRGELAVDDADRETDARTPAPAARHASRSQGRGLIRLARRVWPDSGWEELGPRPHLAVVAGRVGALSGLAPEHNALHLVYITMTGSAIAAQRLLALDPAEVTVVTFQLSELCEQIAQEATAGLADLSDPLLDTLAQRHDERVRPLFVS.

Residues 71–93 (DDADRETDARTPAPAARHASRSQ) form a disordered region.

Belongs to the UreF family. As to quaternary structure, ureD, UreF and UreG form a complex that acts as a GTP-hydrolysis-dependent molecular chaperone, activating the urease apoprotein by helping to assemble the nickel containing metallocenter of UreC. The UreE protein probably delivers the nickel.

The protein resides in the cytoplasm. In terms of biological role, required for maturation of urease via the functional incorporation of the urease nickel metallocenter. This chain is Urease accessory protein UreF, found in Mycobacterium bovis (strain ATCC BAA-935 / AF2122/97).